We begin with the raw amino-acid sequence, 444 residues long: Homocysteine/cysteine synthase (444 aa).

Ser44 is subject to Phosphoserine. Residue Lys160 forms a Glycyl lysine isopeptide (Lys-Gly) (interchain with G-Cter in ubiquitin) linkage. Lys209 carries the post-translational modification N6-(pyridoxal phosphate)lysine.

Belongs to the trans-sulfuration enzymes family. Homotetramer. Pyridoxal 5'-phosphate serves as cofactor.

It localises to the cytoplasm. The catalysed reaction is O-acetyl-L-homoserine + methanethiol = L-methionine + acetate + H(+). The enzyme catalyses O-acetyl-L-homoserine + hydrogen sulfide = L-homocysteine + acetate. It carries out the reaction O-acetyl-L-serine + hydrogen sulfide = L-cysteine + acetate. It functions in the pathway amino-acid biosynthesis; L-methionine biosynthesis via de novo pathway; L-homocysteine from O-acetyl-L-homoserine. In terms of biological role, catalyzes the conversion of O-acetyl-L-homoserine (OAH) into homocysteine in the methionine biosynthesis pathway. Required to efficiently reduce toxic levels of hydrogen sulfide generated when the sulfate assimilation pathway (SAP) is active. Also catalyzes the conversion of O-acetylserine (OAS) into cysteine, the last step in the cysteine biosynthesis pathway. However, it seems that in S.cerevisiae cysteine biosynthesis occurs exclusively through the cystathionine pathway and not via direct incorporation of sulfur into OAS. It therefore has no metabolic role in cysteine biosynthesis and may only have a regulatory role controlling OAS levels. The chain is Homocysteine/cysteine synthase from Saccharomyces cerevisiae (strain ATCC 204508 / S288c) (Baker's yeast).